Consider the following 118-residue polypeptide: Large ribosomal subunit protein bL20 (118 aa).

It belongs to the bacterial ribosomal protein bL20 family.

Functionally, binds directly to 23S ribosomal RNA and is necessary for the in vitro assembly process of the 50S ribosomal subunit. It is not involved in the protein synthesizing functions of that subunit. This chain is Large ribosomal subunit protein bL20, found in Lactobacillus delbrueckii subsp. bulgaricus (strain ATCC BAA-365 / Lb-18).